The primary structure comprises 263 residues: S-adenosylmethionine decarboxylase proenzyme (263 aa).

Ser113 functions as the Schiff-base intermediate with substrate; via pyruvic acid in the catalytic mechanism. The residue at position 113 (Ser113) is a Pyruvic acid (Ser); by autocatalysis. His118 acts as the Proton acceptor; for processing activity in catalysis. Catalysis depends on Cys141, which acts as the Proton donor; for catalytic activity.

This sequence belongs to the prokaryotic AdoMetDC family. Type 2 subfamily. As to quaternary structure, heterooctamer of four alpha and four beta chains arranged as a tetramer of alpha/beta heterodimers. Pyruvate serves as cofactor. Post-translationally, is synthesized initially as an inactive proenzyme. Formation of the active enzyme involves a self-maturation process in which the active site pyruvoyl group is generated from an internal serine residue via an autocatalytic post-translational modification. Two non-identical subunits are generated from the proenzyme in this reaction, and the pyruvate is formed at the N-terminus of the alpha chain, which is derived from the carboxyl end of the proenzyme. The post-translation cleavage follows an unusual pathway, termed non-hydrolytic serinolysis, in which the side chain hydroxyl group of the serine supplies its oxygen atom to form the C-terminus of the beta chain, while the remainder of the serine residue undergoes an oxidative deamination to produce ammonia and the pyruvoyl group blocking the N-terminus of the alpha chain.

The enzyme catalyses S-adenosyl-L-methionine + H(+) = S-adenosyl 3-(methylsulfanyl)propylamine + CO2. It functions in the pathway amine and polyamine biosynthesis; S-adenosylmethioninamine biosynthesis; S-adenosylmethioninamine from S-adenosyl-L-methionine: step 1/1. Catalyzes the decarboxylation of S-adenosylmethionine to S-adenosylmethioninamine (dcAdoMet), the propylamine donor required for the synthesis of the polyamines spermine and spermidine from the diamine putrescine. This is S-adenosylmethionine decarboxylase proenzyme from Marinobacter nauticus (strain ATCC 700491 / DSM 11845 / VT8) (Marinobacter aquaeolei).